A 133-amino-acid chain; its full sequence is S-adenosylmethionine decarboxylase proenzyme (133 aa).

Ser-65 serves as the catalytic Schiff-base intermediate with substrate; via pyruvic acid. The residue at position 65 (Ser-65) is a Pyruvic acid (Ser); by autocatalysis. Catalysis depends on His-70, which acts as the Proton acceptor; for processing activity. Residue Cys-85 is the Proton donor; for catalytic activity of the active site.

Belongs to the prokaryotic AdoMetDC family. Type 1 subfamily. As to quaternary structure, heterotetramer of two alpha and two beta chains arranged as a dimer of alpha/beta heterodimers. Pyruvate serves as cofactor. Is synthesized initially as an inactive proenzyme. Formation of the active enzyme involves a self-maturation process in which the active site pyruvoyl group is generated from an internal serine residue via an autocatalytic post-translational modification. Two non-identical subunits are generated from the proenzyme in this reaction, and the pyruvate is formed at the N-terminus of the alpha chain, which is derived from the carboxyl end of the proenzyme. The post-translation cleavage follows an unusual pathway, termed non-hydrolytic serinolysis, in which the side chain hydroxyl group of the serine supplies its oxygen atom to form the C-terminus of the beta chain, while the remainder of the serine residue undergoes an oxidative deamination to produce ammonia and the pyruvoyl group blocking the N-terminus of the alpha chain.

It catalyses the reaction S-adenosyl-L-methionine + H(+) = S-adenosyl 3-(methylsulfanyl)propylamine + CO2. It functions in the pathway amine and polyamine biosynthesis; S-adenosylmethioninamine biosynthesis; S-adenosylmethioninamine from S-adenosyl-L-methionine: step 1/1. Catalyzes the decarboxylation of S-adenosylmethionine to S-adenosylmethioninamine (dcAdoMet), the propylamine donor required for the synthesis of the polyamines spermine and spermidine from the diamine putrescine. This Brevibacillus brevis (strain 47 / JCM 6285 / NBRC 100599) protein is S-adenosylmethionine decarboxylase proenzyme.